The chain runs to 298 residues: Glycine--tRNA ligase alpha subunit (298 aa).

This sequence belongs to the class-II aminoacyl-tRNA synthetase family. As to quaternary structure, tetramer of two alpha and two beta subunits.

Its subcellular location is the cytoplasm. It carries out the reaction tRNA(Gly) + glycine + ATP = glycyl-tRNA(Gly) + AMP + diphosphate. The protein is Glycine--tRNA ligase alpha subunit of Helicobacter pylori (strain P12).